The following is a 446-amino-acid chain: Probable glycine dehydrogenase (decarboxylating) subunit 1 (446 aa).

Belongs to the GcvP family. N-terminal subunit subfamily. In terms of assembly, the glycine cleavage system is composed of four proteins: P, T, L and H. In this organism, the P 'protein' is a heterodimer of two subunits.

The catalysed reaction is N(6)-[(R)-lipoyl]-L-lysyl-[glycine-cleavage complex H protein] + glycine + H(+) = N(6)-[(R)-S(8)-aminomethyldihydrolipoyl]-L-lysyl-[glycine-cleavage complex H protein] + CO2. The glycine cleavage system catalyzes the degradation of glycine. The P protein binds the alpha-amino group of glycine through its pyridoxal phosphate cofactor; CO(2) is released and the remaining methylamine moiety is then transferred to the lipoamide cofactor of the H protein. The chain is Probable glycine dehydrogenase (decarboxylating) subunit 1 from Coxiella burnetii (strain CbuK_Q154) (Coxiella burnetii (strain Q154)).